A 331-amino-acid chain; its full sequence is uncharacterized protein (331 aa).

Disordered regions lie at residues 131–163 and 190–209; these read ISHASDQKSRPKPTKPRASRKRAAIAQSKKKRS and DEQKSRQSTSQPDKEIVQSS. Positions 140-162 are enriched in basic residues; that stretch reads RPKPTKPRASRKRAAIAQSKKKR. Residues 195–209 show a composition bias toward polar residues; that stretch reads RQSTSQPDKEIVQSS.

This is an uncharacterized protein from Caenorhabditis elegans.